Reading from the N-terminus, the 359-residue chain is 3-dehydroquinate synthase (359 aa).

Residues 71-76 (DGEQYK), 104-108 (GVVGD), 128-129 (TT), lysine 141, lysine 150, and 168-171 (TLNT) each bind NAD(+). Positions 183, 247, and 264 each coordinate Zn(2+).

The protein belongs to the sugar phosphate cyclases superfamily. Dehydroquinate synthase family. Co(2+) is required as a cofactor. Requires Zn(2+) as cofactor. The cofactor is NAD(+).

It is found in the cytoplasm. The catalysed reaction is 7-phospho-2-dehydro-3-deoxy-D-arabino-heptonate = 3-dehydroquinate + phosphate. The protein operates within metabolic intermediate biosynthesis; chorismate biosynthesis; chorismate from D-erythrose 4-phosphate and phosphoenolpyruvate: step 2/7. Functionally, catalyzes the conversion of 3-deoxy-D-arabino-heptulosonate 7-phosphate (DAHP) to dehydroquinate (DHQ). The sequence is that of 3-dehydroquinate synthase from Coxiella burnetii (strain Dugway 5J108-111).